The sequence spans 886 residues: Valine--tRNA ligase (886 aa).

Residues 53-63 carry the 'HIGH' region motif; sequence PNVTGSLHMGH. The 'KMSKS' region motif lies at 540 to 544; it reads KMSKS. Lysine 543 is a binding site for ATP. A coiled-coil region spans residues 820–851; the sequence is IDVAAERRRMEKDLAAAQKELASTAAKLANAD.

This sequence belongs to the class-I aminoacyl-tRNA synthetase family. ValS type 1 subfamily. In terms of assembly, monomer.

Its subcellular location is the cytoplasm. The catalysed reaction is tRNA(Val) + L-valine + ATP = L-valyl-tRNA(Val) + AMP + diphosphate. Functionally, catalyzes the attachment of valine to tRNA(Val). As ValRS can inadvertently accommodate and process structurally similar amino acids such as threonine, to avoid such errors, it has a 'posttransfer' editing activity that hydrolyzes mischarged Thr-tRNA(Val) in a tRNA-dependent manner. The chain is Valine--tRNA ligase from Mycobacterium leprae (strain TN).